Reading from the N-terminus, the 218-residue chain is Pyridoxine/pyridoxamine 5'-phosphate oxidase (218 aa).

Substrate is bound by residues 14–17 and lysine 72; that span reads RREY. FMN contacts are provided by residues 67 to 72, 82 to 83, arginine 88, lysine 89, and glutamine 111; these read RIVLLK and YT. Substrate contacts are provided by tyrosine 129, arginine 133, and serine 137. Residues 146–147 and tryptophan 191 contribute to the FMN site; that span reads QS. A substrate-binding site is contributed by 197–199; it reads RLH. Position 201 (arginine 201) interacts with FMN.

This sequence belongs to the pyridoxamine 5'-phosphate oxidase family. As to quaternary structure, homodimer. FMN serves as cofactor.

It carries out the reaction pyridoxamine 5'-phosphate + O2 + H2O = pyridoxal 5'-phosphate + H2O2 + NH4(+). The catalysed reaction is pyridoxine 5'-phosphate + O2 = pyridoxal 5'-phosphate + H2O2. The protein operates within cofactor metabolism; pyridoxal 5'-phosphate salvage; pyridoxal 5'-phosphate from pyridoxamine 5'-phosphate: step 1/1. It functions in the pathway cofactor metabolism; pyridoxal 5'-phosphate salvage; pyridoxal 5'-phosphate from pyridoxine 5'-phosphate: step 1/1. Functionally, catalyzes the oxidation of either pyridoxine 5'-phosphate (PNP) or pyridoxamine 5'-phosphate (PMP) into pyridoxal 5'-phosphate (PLP). The chain is Pyridoxine/pyridoxamine 5'-phosphate oxidase from Escherichia fergusonii (strain ATCC 35469 / DSM 13698 / CCUG 18766 / IAM 14443 / JCM 21226 / LMG 7866 / NBRC 102419 / NCTC 12128 / CDC 0568-73).